We begin with the raw amino-acid sequence, 428 residues long: Cytochrome c biogenesis protein CcsB (428 aa).

The next 3 membrane-spanning stretches (helical) occupy residues 14-34 (LKFA…GTFI), 72-92 (SLWF…CSFR), and 162-182 (IGPL…AYGS).

This sequence belongs to the Ccs1/CcsB family. In terms of assembly, may interact with CcsA.

It is found in the cellular thylakoid membrane. Its function is as follows. Required during biogenesis of c-type cytochromes (cytochrome c6 and cytochrome f) at the step of heme attachment. This Prochlorococcus marinus (strain MIT 9301) protein is Cytochrome c biogenesis protein CcsB.